An 864-amino-acid chain; its full sequence is Alanine--tRNA ligase (864 aa).

Residues His-534, His-538, Cys-639, and His-643 each coordinate Zn(2+).

Belongs to the class-II aminoacyl-tRNA synthetase family. Requires Zn(2+) as cofactor.

The protein localises to the cytoplasm. The enzyme catalyses tRNA(Ala) + L-alanine + ATP = L-alanyl-tRNA(Ala) + AMP + diphosphate. Catalyzes the attachment of alanine to tRNA(Ala) in a two-step reaction: alanine is first activated by ATP to form Ala-AMP and then transferred to the acceptor end of tRNA(Ala). Also edits incorrectly charged Ser-tRNA(Ala) and Gly-tRNA(Ala) via its editing domain. The chain is Alanine--tRNA ligase from Aster yellows witches'-broom phytoplasma (strain AYWB).